Reading from the N-terminus, the 420-residue chain is Fasciclin-like arabinogalactan protein 4 (420 aa).

An N-terminal signal peptide occupies residues 1–28; sequence MANVISISHFTLLALPYLLLLLSSTAAA. 2 FAS1 domains span residues 29 to 177 and 205 to 351; these read INVT…DSLI and GINL…SKVL. 8 N-linked (GlcNAc...) asparagine glycosylation sites follow: Asn-30, Asn-40, Asn-135, Asn-154, Asn-167, Asn-207, Asn-312, and Asn-317. The disordered stretch occupies residues 360–388; sequence SGQPVATAPPQEISLSPESSSEQPSRLVS. Positions 368–384 are enriched in low complexity; that stretch reads PPQEISLSPESSSEQPS. Ser-396 is lipidated: GPI-anchor amidated serine. Residues 397–420 constitute a propeptide, removed in mature form; the sequence is GAVKRPLGFLVLWCWCIAFCYVLV.

Belongs to the fasciclin-like AGP family. As to expression, expressed in all plant organs and tissues, including guard cells in the leaf.

It localises to the cell membrane. In terms of biological role, may be a cell surface adhesion protein that is required for normal cell expansion. This is Fasciclin-like arabinogalactan protein 4 (FLA4) from Arabidopsis thaliana (Mouse-ear cress).